Consider the following 508-residue polypeptide: Maturase K (508 aa).

This sequence belongs to the intron maturase 2 family. MatK subfamily.

The protein resides in the plastid. It is found in the chloroplast. Its function is as follows. Usually encoded in the trnK tRNA gene intron. Probably assists in splicing its own and other chloroplast group II introns. In Cunninghamia lanceolata (China fir), this protein is Maturase K.